A 423-amino-acid polypeptide reads, in one-letter code: Hypoxia responsive morphology factor B (423 aa).

A Bipartite nuclear localization signal motif is present at residues 46 to 69 (KRSKTRRPKKEYKLQYENTKAHRV). An RNA recognition motif (RRM)-like domain region spans residues 157–187 (TQNCWAYRAAYLNAVHTIFSEQICSAMEVSP). Residues 243-257 (LSPQSGRGPEPSTQI) show a composition bias toward polar residues. The segment at 243-273 (LSPQSGRGPEPSTQIAEPGRHDSQSEQSTIS) is disordered.

This sequence belongs to the hrmA family.

The protein localises to the nucleus. Functionally, probably modulates the generation of the hypoxia-typic morphotype (called H-MORPH) with altered biofilm architecture that leads to increased host inflammation, rapid disease progression, and mortality in a murine model of invasive aspergillosis. The chain is Hypoxia responsive morphology factor B from Aspergillus fumigatus (strain CBS 144.89 / FGSC A1163 / CEA10) (Neosartorya fumigata).